We begin with the raw amino-acid sequence, 338 residues long: Anthranilate phosphoribosyltransferase (338 aa).

5-phospho-alpha-D-ribose 1-diphosphate contacts are provided by residues glycine 80, 83–84, threonine 88, 90–93, 108–116, and serine 120; these read GD, NIST, and KHGNRSVSS. Glycine 80 is a binding site for anthranilate. Serine 92 contributes to the Mg(2+) binding site. Asparagine 111 is a binding site for anthranilate. Anthranilate is bound at residue arginine 166. Residues aspartate 225 and glutamate 226 each coordinate Mg(2+).

Belongs to the anthranilate phosphoribosyltransferase family. As to quaternary structure, homodimer. Mg(2+) serves as cofactor.

The catalysed reaction is N-(5-phospho-beta-D-ribosyl)anthranilate + diphosphate = 5-phospho-alpha-D-ribose 1-diphosphate + anthranilate. It participates in amino-acid biosynthesis; L-tryptophan biosynthesis; L-tryptophan from chorismate: step 2/5. Its function is as follows. Catalyzes the transfer of the phosphoribosyl group of 5-phosphorylribose-1-pyrophosphate (PRPP) to anthranilate to yield N-(5'-phosphoribosyl)-anthranilate (PRA). The polypeptide is Anthranilate phosphoribosyltransferase (Desulfatibacillum aliphaticivorans).